Consider the following 566-residue polypeptide: Osteoclast stimulatory transmembrane protein (566 aa).

The Cytoplasmic segment spans residues 1–51; sequence MPGHPGAAEQLVKTGWRSWHLGFWKALAPLQAAWDAFSQPVPASCGQLLTQ. The helical transmembrane segment at 52 to 72 threads the bilayer; sequence LLLCASLAAAAAGLVYHWLAS. Topologically, residues 73 to 81 are extracellular; the sequence is LLLYPPGPS. Residues 82-102 form a helical membrane-spanning segment; it reads AMVATVCGLLVFLSLGLVPPV. The Cytoplasmic portion of the chain corresponds to 103-128; it reads RCLFALSVPTLGMEQGRRLLLSYSTA. The helical transmembrane segment at 129–149 threads the bilayer; that stretch reads TLAIAVVPNVLANVGAAGQVL. Over 150–227 the chain is Extracellular; that stretch reads RCVTEGSLES…ARAAALGTQR (78 aa). The chain crosses the membrane as a helical span at residues 228–248; it reads VVTGLFMLGLLVESAWYLHCY. The Cytoplasmic portion of the chain corresponds to 249 to 304; that stretch reads LTDLRFDNIYATQQLTQRLAQAQATHLLAPPPTWLLQAAQLRLSQEELLSCLLRLG. A helical membrane pass occupies residues 305–325; it reads LLALLLVATAVAVATDHVAFL. At 326-398 the chain is on the extracellular side; the sequence is LAQATVDWAQ…CPLLPARRPR (73 aa). The chain crosses the membrane as a helical span at residues 399 to 419; sequence AAAPLAAGALQLLAGSTVLLE. Residues 420 to 566 are Cytoplasmic-facing; that stretch reads AYARRLRHAI…EGNTGHDRPG (147 aa).

The protein resides in the membrane. In terms of biological role, probable cell surface receptor that plays a role in cellular fusion and cell differentiation. Cooperates with DCSTAMP in modulating cell-cell fusion in both osteoclasts and foreign body giant cells (FBGCs). Involved in osteoclast bone resorption. Promotes osteoclast differentiation and may play a role in the multinucleated osteoclast maturation. This chain is Osteoclast stimulatory transmembrane protein (OCSTAMP), found in Homo sapiens (Human).